We begin with the raw amino-acid sequence, 444 residues long: Exodeoxyribonuclease 7 large subunit (444 aa).

Belongs to the XseA family. As to quaternary structure, heterooligomer composed of large and small subunits.

It is found in the cytoplasm. It carries out the reaction Exonucleolytic cleavage in either 5'- to 3'- or 3'- to 5'-direction to yield nucleoside 5'-phosphates.. In terms of biological role, bidirectionally degrades single-stranded DNA into large acid-insoluble oligonucleotides, which are then degraded further into small acid-soluble oligonucleotides. In Hahella chejuensis (strain KCTC 2396), this protein is Exodeoxyribonuclease 7 large subunit.